The sequence spans 460 residues: Probable protein phosphatase 2C 38 (460 aa).

Disordered regions lie at residues 1-30 (MVAVTGGRPPGLQDAPGAPPPAPAAEAVPS) and 83-111 (RPMRRRRRGGSSSSSSSPRDREPRDGRIA). A compositionally biased stretch (basic and acidic residues) spans 100 to 109 (PRDREPRDGR). The PPM-type phosphatase domain occupies 118–432 (AASLYTMRGN…DDCAVVCLFL (315 aa)). Residues Asp-154 and Gly-155 each coordinate Mn(2+). The interval 192-219 (VTSSMTEGGGTERMDRDTETPLGTEENG) is disordered. Basic and acidic residues predominate over residues 201-210 (GTERMDRDTE). Mn(2+)-binding residues include Asp-377 and Asp-423.

This sequence belongs to the PP2C family. It depends on Mg(2+) as a cofactor. Requires Mn(2+) as cofactor.

It catalyses the reaction O-phospho-L-seryl-[protein] + H2O = L-seryl-[protein] + phosphate. The catalysed reaction is O-phospho-L-threonyl-[protein] + H2O = L-threonyl-[protein] + phosphate. This Oryza sativa subsp. japonica (Rice) protein is Probable protein phosphatase 2C 38.